Here is a 309-residue protein sequence, read N- to C-terminus: tRNA dimethylallyltransferase (309 aa).

13-20 (GPTAVGKS) serves as a coordination point for ATP. 15 to 20 (TAVGKS) provides a ligand contact to substrate.

It belongs to the IPP transferase family. As to quaternary structure, monomer. It depends on Mg(2+) as a cofactor.

It carries out the reaction adenosine(37) in tRNA + dimethylallyl diphosphate = N(6)-dimethylallyladenosine(37) in tRNA + diphosphate. Functionally, catalyzes the transfer of a dimethylallyl group onto the adenine at position 37 in tRNAs that read codons beginning with uridine, leading to the formation of N6-(dimethylallyl)adenosine (i(6)A). This chain is tRNA dimethylallyltransferase, found in Lacticaseibacillus paracasei (strain ATCC 334 / BCRC 17002 / CCUG 31169 / CIP 107868 / KCTC 3260 / NRRL B-441) (Lactobacillus paracasei).